An 87-amino-acid polypeptide reads, in one-letter code: MKKDIHPEYREVVFQDISTDFSFLTRSTVKTDETITWQDGNEYPLVKIEVSSRSHPFFTGKQRVVHSGGQVDRFRKRFGMTRGSSSQ.

Belongs to the bacterial ribosomal protein bL31 family. Type B subfamily. As to quaternary structure, part of the 50S ribosomal subunit.

In Halorhodospira halophila (strain DSM 244 / SL1) (Ectothiorhodospira halophila (strain DSM 244 / SL1)), this protein is Large ribosomal subunit protein bL31B.